A 168-amino-acid polypeptide reads, in one-letter code: Translationally-controlled tumor protein homolog (168 aa).

A TCTP domain is found at 1-168 (MLVYQDLLTG…IAPGLKEIKC (168 aa)).

Belongs to the TCTP family.

The protein localises to the cytoplasm. Involved in calcium binding and microtubule stabilization. This is Translationally-controlled tumor protein homolog (TCTP) from Solanum lycopersicum (Tomato).